We begin with the raw amino-acid sequence, 443 residues long: Ribulose bisphosphate carboxylase large chain (443 aa).

Lys7 bears the N6,N6,N6-trimethyllysine mark. Positions 116 and 166 each coordinate substrate. Catalysis depends on Lys168, which acts as the Proton acceptor. Lys170 contributes to the substrate binding site. Mg(2+)-binding residues include Lys194, Asp196, and Glu197. An N6-carboxylysine modification is found at Lys194. Residue His287 is the Proton acceptor of the active site. Arg288, His320, and Ser372 together coordinate substrate.

It belongs to the RuBisCO large chain family. Type I subfamily. Heterohexadecamer of 8 large chains and 8 small chains; disulfide-linked. The disulfide link is formed within the large subunit homodimers. Mg(2+) serves as cofactor. Post-translationally, the disulfide bond which can form in the large chain dimeric partners within the hexadecamer appears to be associated with oxidative stress and protein turnover.

The protein resides in the plastid. It is found in the chloroplast. The catalysed reaction is 2 (2R)-3-phosphoglycerate + 2 H(+) = D-ribulose 1,5-bisphosphate + CO2 + H2O. The enzyme catalyses D-ribulose 1,5-bisphosphate + O2 = 2-phosphoglycolate + (2R)-3-phosphoglycerate + 2 H(+). Its function is as follows. RuBisCO catalyzes two reactions: the carboxylation of D-ribulose 1,5-bisphosphate, the primary event in carbon dioxide fixation, as well as the oxidative fragmentation of the pentose substrate in the photorespiration process. Both reactions occur simultaneously and in competition at the same active site. The chain is Ribulose bisphosphate carboxylase large chain from Abies homolepis (Nikko fir).